A 674-amino-acid polypeptide reads, in one-letter code: YAP1-binding protein 1 (674 aa).

The protein belongs to the YBP1 family. As to quaternary structure, interacts with YAP1. Forms a peroxide stress induced complex with YAP1 in the cytoplasm. Systematic proteome-wide 2-hybrid interaction studies suggest that YAP1, HYR1/GPX3, and YBP1 all interact with the nuclear pore complex subunit NUP116, which is involved in nucleocytoplasmic transport.

The protein resides in the cytoplasm. In terms of biological role, involved in oxidative stress response and redox homeostasis. Required for hydrogen peroxide-induced oxidation and nuclear localization (activation) of YAP1. Functions probably in concert with HYP1/GPX3, the actual YAP1 modifying enzyme. YBP1 is not required for HYP1/GPX3-independent, diamide-induced oxidation of YAP1. The polypeptide is YAP1-binding protein 1 (Saccharomyces cerevisiae (strain ATCC 204508 / S288c) (Baker's yeast)).